We begin with the raw amino-acid sequence, 1465 residues long: DNA polymerase III polC-type (1465 aa).

The Exonuclease domain maps to 427-583 (YVVFDVETTG…YDAEATGRLL (157 aa)).

It belongs to the DNA polymerase type-C family. PolC subfamily.

It is found in the cytoplasm. The enzyme catalyses DNA(n) + a 2'-deoxyribonucleoside 5'-triphosphate = DNA(n+1) + diphosphate. Functionally, required for replicative DNA synthesis. This DNA polymerase also exhibits 3' to 5' exonuclease activity. The sequence is that of DNA polymerase III polC-type from Streptococcus pyogenes serotype M3 (strain ATCC BAA-595 / MGAS315).